The sequence spans 926 residues: Alpha-aminoadipic semialdehyde synthase, mitochondrial (926 aa).

A mitochondrion-targeting transit peptide spans 1 to 27 (MLRVSRTKLGRLSPSLSRGLHHKAVMA). Residues 28–455 (LRREDVNAWE…DAVIASNGML (428 aa)) are lysine-ketoglutarate reductase. 2 positions are modified to N6-acetyllysine: K48 and K56. K93 bears the N6-acetyllysine; alternate mark. K93 is modified (N6-succinyllysine; alternate). The residue at position 128 (K128) is an N6-acetyllysine. N6-acetyllysine; alternate is present on K138. At K138 the chain carries N6-succinyllysine; alternate. K274 bears the N6-succinyllysine mark. The residue at position 286 (K286) is an N6-acetyllysine; alternate. N6-succinyllysine; alternate is present on K286. An N6-succinyllysine modification is found at K333. The residue at position 458 (K458) is an N6-acetyllysine; alternate. Residue K458 is modified to N6-succinyllysine; alternate. The interval 477–926 (MGTKKKVLVL…MYTTQSTIKL (450 aa)) is saccharopine dehydrogenase. NAD(+)-binding residues include S488, D512, and Q516. K523 and K535 each carry N6-acetyllysine; alternate. Residues K523 and K535 each carry the N6-succinyllysine; alternate modification. The NAD(+) site is built by L554, A576, and S577. L-saccharopine is bound at residue 577–578 (SY). Position 584 is an N6-acetyllysine; alternate (K584). The residue at position 584 (K584) is an N6-succinyllysine; alternate. 3 residues coordinate NAD(+): L603, D604, and P605. D604 is an L-saccharopine binding site. R703 serves as a coordination point for L-saccharopine. K707 carries the N6-acetyllysine modification. Position 724–726 (724–726 (TLR)) interacts with L-saccharopine. Position 732 is an N6-succinyllysine (K732). At K739 the chain carries N6-acetyllysine. K761 is subject to N6-acetyllysine; alternate. K761 is subject to N6-succinyllysine; alternate. Residue K780 is modified to N6-acetyllysine.

This sequence in the N-terminal section; belongs to the AlaDH/PNT family. In the C-terminal section; belongs to the saccharopine dehydrogenase family. As to quaternary structure, homotetramer.

It is found in the mitochondrion. The enzyme catalyses L-saccharopine + NADP(+) + H2O = L-lysine + 2-oxoglutarate + NADPH + H(+). It carries out the reaction L-saccharopine + NAD(+) + H2O = (S)-2-amino-6-oxohexanoate + L-glutamate + NADH + H(+). Its pathway is amino-acid degradation; L-lysine degradation via saccharopine pathway; glutaryl-CoA from L-lysine: step 1/6. It functions in the pathway amino-acid degradation; L-lysine degradation via saccharopine pathway; glutaryl-CoA from L-lysine: step 2/6. Its function is as follows. Bifunctional enzyme that catalyzes the first two steps in lysine degradation. The sequence is that of Alpha-aminoadipic semialdehyde synthase, mitochondrial from Bos taurus (Bovine).